Here is a 217-residue protein sequence, read N- to C-terminus: Protein-L-isoaspartate O-methyltransferase (217 aa).

Residue Ser59 is part of the active site.

This sequence belongs to the methyltransferase superfamily. L-isoaspartyl/D-aspartyl protein methyltransferase family.

It localises to the cytoplasm. It carries out the reaction [protein]-L-isoaspartate + S-adenosyl-L-methionine = [protein]-L-isoaspartate alpha-methyl ester + S-adenosyl-L-homocysteine. Catalyzes the methyl esterification of L-isoaspartyl residues in peptides and proteins that result from spontaneous decomposition of normal L-aspartyl and L-asparaginyl residues. It plays a role in the repair and/or degradation of damaged proteins. This chain is Protein-L-isoaspartate O-methyltransferase (pcm), found in Methanothermobacter thermautotrophicus (strain ATCC 29096 / DSM 1053 / JCM 10044 / NBRC 100330 / Delta H) (Methanobacterium thermoautotrophicum).